We begin with the raw amino-acid sequence, 285 residues long: Catechol-2,3-dioxygenase (285 aa).

2 consecutive VOC domains span residues H9–D126 and I169–I285. Residues H213 and E264 each coordinate Fe cation.

Belongs to the extradiol ring-cleavage dioxygenase family. It depends on Fe(2+) as a cofactor.

The enzyme catalyses catechol + O2 = (2Z,4E)-2-hydroxy-6-oxohexa-2,4-dienoate + H(+). In terms of biological role, involved in the meta cleavage of catechol to 2-hydroxymuconic semialdehyde. Essential for growth and viability in the presence of catechol and probably involved in the detoxification of catechol. This chain is Catechol-2,3-dioxygenase (catE), found in Bacillus subtilis (strain 168).